Here is a 107-residue protein sequence, read N- to C-terminus: L-rhamnose mutarotase (107 aa).

Residue Tyr21 coordinates substrate. His25 functions as the Proton donor in the catalytic mechanism. Substrate contacts are provided by residues Tyr44 and 79–80; that span reads WW. Residues 88 to 107 form a disordered region; that stretch reads ETNPDNSPKTNSLKEVFHLD. Residues 90–100 show a composition bias toward polar residues; sequence NPDNSPKTNSL.

It belongs to the rhamnose mutarotase family. As to quaternary structure, homodimer.

It localises to the cytoplasm. The catalysed reaction is alpha-L-rhamnose = beta-L-rhamnose. It functions in the pathway carbohydrate metabolism; L-rhamnose metabolism. Its function is as follows. Involved in the anomeric conversion of L-rhamnose. The chain is L-rhamnose mutarotase from Flavobacterium johnsoniae (strain ATCC 17061 / DSM 2064 / JCM 8514 / BCRC 14874 / CCUG 350202 / NBRC 14942 / NCIMB 11054 / UW101) (Cytophaga johnsonae).